The sequence spans 27 residues: Flagellar filament 34 kDa core protein (27 aa).

Belongs to the bacterial flagellin family. As to quaternary structure, the flagellum consists of an outer layer composed of repeating units of FlaA around a core that contains one or all of five antigenically related polypeptides.

The protein resides in the periplasmic flagellum. It is found in the periplasm. Component of the core of the flagella. In Spirochaeta aurantia, this protein is Flagellar filament 34 kDa core protein.